A 184-amino-acid polypeptide reads, in one-letter code: dCTP deaminase (184 aa).

DCTP is bound by residues 107–112, 131–133, Gln-152, Tyr-166, and Gln-176; these read KSTYAR and TLE. The active-site Proton donor/acceptor is the Glu-133.

This sequence belongs to the dCTP deaminase family. In terms of assembly, homotrimer.

It carries out the reaction dCTP + H2O + H(+) = dUTP + NH4(+). It functions in the pathway pyrimidine metabolism; dUMP biosynthesis; dUMP from dCTP (dUTP route): step 1/2. Functionally, catalyzes the deamination of dCTP to dUTP. The chain is dCTP deaminase from Rhizorhabdus wittichii (strain DSM 6014 / CCUG 31198 / JCM 15750 / NBRC 105917 / EY 4224 / RW1) (Sphingomonas wittichii).